The sequence spans 350 residues: Phosphoribosylformylglycinamidine cyclo-ligase (350 aa).

This sequence belongs to the AIR synthase family.

It localises to the cytoplasm. It carries out the reaction 2-formamido-N(1)-(5-O-phospho-beta-D-ribosyl)acetamidine + ATP = 5-amino-1-(5-phospho-beta-D-ribosyl)imidazole + ADP + phosphate + H(+). The protein operates within purine metabolism; IMP biosynthesis via de novo pathway; 5-amino-1-(5-phospho-D-ribosyl)imidazole from N(2)-formyl-N(1)-(5-phospho-D-ribosyl)glycinamide: step 2/2. This is Phosphoribosylformylglycinamidine cyclo-ligase from Pseudoalteromonas translucida (strain TAC 125).